The following is a 513-amino-acid chain: Abl interactor 2 (513 aa).

Phosphoserine is present on serine 40. One can recognise a t-SNARE coiled-coil homology domain in the interval 45-107; it reads RALEETKAYT…DIHKEKVARR (63 aa). The segment at 167–431 is disordered; the sequence is KMGGLPRTTP…PPEDYEEEEA (265 aa). Over residues 174-185 the composition is skewed to pro residues; it reads TTPPTQKPPSPP. Phosphoserine is present on residues serine 183 and serine 227. Residues 217–241 are compositionally biased toward polar residues; that stretch reads PTRNMAPSQQSPVRTASVNQRNRTY. Low complexity predominate over residues 242–272; it reads SSSGSSGGSHPSSRSSSRENSGSGSVGVPIA. Residues 273-282 show a composition bias toward pro residues; that stretch reads VPTPSPPSVF. The span at 283-325 shows a compositional bias: low complexity; it reads PAPAGSAGTPPLPATSASAPAPLVPATVPSSTAPNAAAGGAPN. Threonine 361 carries the post-translational modification Phosphothreonine. Serine 368 is subject to Phosphoserine. Residues 376–399 are compositionally biased toward polar residues; it reads SITSQTSLQNQMNGGPFYSQNPVS. Residues 400-409 show a composition bias toward pro residues; sequence DTPPPPPPVE. Positions 451–510 constitute an SH3 domain; sequence SYLEKVVAIYDYTKDKEDELSFQEGAIIYVIKKNDDGWYEGVMNGVTGLFPGNYVESIMH.

This sequence belongs to the ABI family. As to quaternary structure, component of the WAVE complex composed of ABI2, CYFIP1 or CYFIP2, BRK1, NCKAP1 and WASF1/WAVE1. Within the complex, a heterodimer containing NCKAP1 and CYFIP1 interacts with a heterotrimer formed by WAVE1, ABI2 and BRK1. CYFIP2 binds to activated RAC1 which causes the complex to dissociate, releasing activated WASF1. Interacts (via SH3 domain) with ABL1 and ABL2. In terms of assembly, (Microbial infection) Interacts with human cytomegalovirus UL135. Post-translationally, phosphorylated by ABL1. In terms of tissue distribution, widely expressed. Abundant in testes, ovary, thymus, and colon, with lower but detectable levels in prostate, peripheral blood leukocytes, and spleen.

The protein localises to the cytoplasm. It is found in the nucleus. The protein resides in the cell projection. It localises to the lamellipodium. Its subcellular location is the filopodium. The protein localises to the cytoskeleton. It is found in the cell junction. The protein resides in the adherens junction. In terms of biological role, regulator of actin cytoskeleton dynamics underlying cell motility and adhesion. Functions as a component of the WAVE complex, which activates actin nucleating machinery Arp2/3 to drive lamellipodia formation. Acts as a regulator and substrate of nonreceptor tyrosine kinases ABL1 and ABL2 involved in processes linked to cell growth and differentiation. Positively regulates ABL1-mediated phosphorylation of ENAH, which is required for proper polymerization of nucleated actin filaments at the leading edge. Contributes to the regulation of actin assembly at the tips of neuron projections. In particular, controls dendritic spine morphogenesis and may promote dendritic spine specification toward large mushroom-type spines known as repositories of memory in the brain. In hippocampal neurons, may mediate actin-dependent BDNF-NTRK2 early endocytic trafficking that triggers dendrite outgrowth. Participates in ocular lens morphogenesis, likely by regulating lamellipodia-driven adherens junction formation at the epithelial cell-secondary lens fiber interface. Also required for nascent adherens junction assembly in epithelial cells. The polypeptide is Abl interactor 2 (Homo sapiens (Human)).